A 434-amino-acid polypeptide reads, in one-letter code: 3-phosphoshikimate 1-carboxyvinyltransferase (434 aa).

Positions 22, 23, and 27 each coordinate 3-phosphoshikimate. Lysine 22 provides a ligand contact to phosphoenolpyruvate. Residues glycine 93 and arginine 121 each coordinate phosphoenolpyruvate. 6 residues coordinate 3-phosphoshikimate: serine 168, serine 169, glutamine 170, serine 199, aspartate 320, and lysine 347. Position 170 (glutamine 170) interacts with phosphoenolpyruvate. Aspartate 320 serves as the catalytic Proton acceptor. Arginine 351, arginine 394, and lysine 419 together coordinate phosphoenolpyruvate.

The protein belongs to the EPSP synthase family. As to quaternary structure, monomer.

It localises to the cytoplasm. The catalysed reaction is 3-phosphoshikimate + phosphoenolpyruvate = 5-O-(1-carboxyvinyl)-3-phosphoshikimate + phosphate. It participates in metabolic intermediate biosynthesis; chorismate biosynthesis; chorismate from D-erythrose 4-phosphate and phosphoenolpyruvate: step 6/7. Catalyzes the transfer of the enolpyruvyl moiety of phosphoenolpyruvate (PEP) to the 5-hydroxyl of shikimate-3-phosphate (S3P) to produce enolpyruvyl shikimate-3-phosphate and inorganic phosphate. This Burkholderia multivorans (strain ATCC 17616 / 249) protein is 3-phosphoshikimate 1-carboxyvinyltransferase.